The following is a 191-amino-acid chain: MYVGRFIVVAPDRAAYRVSSRSFPNRRIVDRDGTLTVGPTEDAPETDNPYISYNCLRTVGDDYAVVGNGTQVDPIAEKLSLGYPPRDALAESLLALDYEKDDYDTPRIAGVVGDESYIGTVRRDALIVEAVEEPTLVATYEKSEPEPTSLGADDPSELAAELYDRDLEHPVCAAGVVADGDSFEVGYYNGE.

This sequence belongs to the archaeal IMP cyclohydrolase family.

It catalyses the reaction IMP + H2O = 5-formamido-1-(5-phospho-D-ribosyl)imidazole-4-carboxamide. It participates in purine metabolism; IMP biosynthesis via de novo pathway; IMP from 5-formamido-1-(5-phospho-D-ribosyl)imidazole-4-carboxamide: step 1/1. Its function is as follows. Catalyzes the cyclization of 5-formylamidoimidazole-4-carboxamide ribonucleotide to IMP. The sequence is that of IMP cyclohydrolase from Natronomonas pharaonis (strain ATCC 35678 / DSM 2160 / CIP 103997 / JCM 8858 / NBRC 14720 / NCIMB 2260 / Gabara) (Halobacterium pharaonis).